Reading from the N-terminus, the 207-residue chain is Small ribosomal subunit protein uS3 (207 aa).

The 70-residue stretch at 17-86 (IDEYLEKELR…NPQIEVEEIK (70 aa)) folds into the KH type-2 domain.

It belongs to the universal ribosomal protein uS3 family. Part of the 30S ribosomal subunit.

In terms of biological role, binds the lower part of the 30S subunit head. This Thermococcus sibiricus (strain DSM 12597 / MM 739) protein is Small ribosomal subunit protein uS3.